We begin with the raw amino-acid sequence, 124 residues long: Small ribosomal subunit protein uS12 (124 aa).

D89 is subject to 3-methylthioaspartic acid. The tract at residues 103–124 (DTAGVQKRRQGRSKYGAKRPKS) is disordered. A compositionally biased stretch (basic residues) spans 108–124 (QKRRQGRSKYGAKRPKS).

This sequence belongs to the universal ribosomal protein uS12 family. In terms of assembly, part of the 30S ribosomal subunit. Contacts proteins S8 and S17. May interact with IF1 in the 30S initiation complex.

In terms of biological role, with S4 and S5 plays an important role in translational accuracy. Interacts with and stabilizes bases of the 16S rRNA that are involved in tRNA selection in the A site and with the mRNA backbone. Located at the interface of the 30S and 50S subunits, it traverses the body of the 30S subunit contacting proteins on the other side and probably holding the rRNA structure together. The combined cluster of proteins S8, S12 and S17 appears to hold together the shoulder and platform of the 30S subunit. The chain is Small ribosomal subunit protein uS12 from Methylococcus capsulatus (strain ATCC 33009 / NCIMB 11132 / Bath).